A 1366-amino-acid polypeptide reads, in one-letter code: DNA-directed RNA polymerase subunit beta' (1366 aa).

A compositionally biased stretch (basic residues) spans 1-20 (MTSSKPKKTSRVRKTTKNSK). Residues 1–34 (MTSSKPKKTSRVRKTTKNSKKNNPLTMPALAKTP) form a disordered region. Residues cysteine 248, cysteine 315, cysteine 322, and cysteine 325 each contribute to the Zn(2+) site. The tract at residues 1291–1366 (YTVDMPQSPS…LQEEGLLSDE (76 aa)) is disordered. A compositionally biased stretch (polar residues) spans 1295–1305 (MPQSPSVSSTA). The span at 1354–1366 (LEGLQEEGLLSDE) shows a compositional bias: low complexity.

The protein belongs to the RNA polymerase beta' chain family. RpoC2 subfamily. In cyanobacteria the RNAP catalytic core is composed of 2 alpha, 1 beta, 1 beta', 1 gamma and 1 omega subunit. When a sigma factor is associated with the core the holoenzyme is formed, which can initiate transcription. Requires Zn(2+) as cofactor.

The catalysed reaction is RNA(n) + a ribonucleoside 5'-triphosphate = RNA(n+1) + diphosphate. Its function is as follows. DNA-dependent RNA polymerase catalyzes the transcription of DNA into RNA using the four ribonucleoside triphosphates as substrates. The chain is DNA-directed RNA polymerase subunit beta' from Prochlorococcus marinus (strain MIT 9301).